Here is a 293-residue protein sequence, read N- to C-terminus: ATP synthase gamma chain (293 aa).

This sequence belongs to the ATPase gamma chain family. As to quaternary structure, F-type ATPases have 2 components, CF(1) - the catalytic core - and CF(0) - the membrane proton channel. CF(1) has five subunits: alpha(3), beta(3), gamma(1), delta(1), epsilon(1). CF(0) has three main subunits: a, b and c.

The protein resides in the cell membrane. Produces ATP from ADP in the presence of a proton gradient across the membrane. The gamma chain is believed to be important in regulating ATPase activity and the flow of protons through the CF(0) complex. This chain is ATP synthase gamma chain, found in Streptococcus agalactiae serotype III (strain NEM316).